The sequence spans 351 residues: UDP-3-O-acylglucosamine N-acyltransferase (351 aa).

The active-site Proton acceptor is histidine 240.

Belongs to the transferase hexapeptide repeat family. LpxD subfamily. Homotrimer.

The enzyme catalyses a UDP-3-O-[(3R)-3-hydroxyacyl]-alpha-D-glucosamine + a (3R)-hydroxyacyl-[ACP] = a UDP-2-N,3-O-bis[(3R)-3-hydroxyacyl]-alpha-D-glucosamine + holo-[ACP] + H(+). Its pathway is bacterial outer membrane biogenesis; LPS lipid A biosynthesis. Its function is as follows. Catalyzes the N-acylation of UDP-3-O-acylglucosamine using 3-hydroxyacyl-ACP as the acyl donor. Is involved in the biosynthesis of lipid A, a phosphorylated glycolipid that anchors the lipopolysaccharide to the outer membrane of the cell. This is UDP-3-O-acylglucosamine N-acyltransferase from Methylacidiphilum infernorum (isolate V4) (Methylokorus infernorum (strain V4)).